We begin with the raw amino-acid sequence, 464 residues long: Fumarate hydratase class II (464 aa).

Substrate contacts are provided by residues 98-100 (SGT), arginine 126, 129-132 (HPND), 139-141 (SSN), and threonine 187. Catalysis depends on histidine 188, which acts as the Proton donor/acceptor. The active site involves serine 318. Substrate contacts are provided by residues serine 319 and 324-326 (KVN).

It belongs to the class-II fumarase/aspartase family. Fumarase subfamily. As to quaternary structure, homotetramer.

It is found in the cytoplasm. It catalyses the reaction (S)-malate = fumarate + H2O. The protein operates within carbohydrate metabolism; tricarboxylic acid cycle; (S)-malate from fumarate: step 1/1. Functionally, involved in the TCA cycle. Catalyzes the stereospecific interconversion of fumarate to L-malate. The polypeptide is Fumarate hydratase class II (Photorhabdus laumondii subsp. laumondii (strain DSM 15139 / CIP 105565 / TT01) (Photorhabdus luminescens subsp. laumondii)).